Here is a 460-residue protein sequence, read N- to C-terminus: Phosphoglucomutase (460 aa).

The Phosphoserine intermediate role is filled by Ser-103. Ser-103 serves as a coordination point for Mg(2+). Substrate is bound by residues 103–104 (SH) and Lys-113. Residues Asp-239, Asp-241, and Asp-243 each coordinate Mg(2+). Substrate-binding positions include 243–244 (DR), Thr-303, and 322–324 (EMS).

Belongs to the phosphohexose mutase family. The cofactor is Mg(2+).

Its subcellular location is the cytoplasm. It carries out the reaction alpha-D-glucose 1-phosphate = alpha-D-glucose 6-phosphate. Its function is as follows. This enzyme participates in both the breakdown and synthesis of glucose. In Neisseria meningitidis serogroup B (strain ATCC BAA-335 / MC58), this protein is Phosphoglucomutase (pgm).